Here is a 291-residue protein sequence, read N- to C-terminus: Inositol-1-monophosphatase (291 aa).

Positions 83, 104, 106, and 107 each coordinate Mg(2+). Glu83 serves as a coordination point for substrate. Substrate is bound by residues 106–109 (IDGT), Arg206, and Asp235. Asp235 lines the Mg(2+) pocket.

It belongs to the inositol monophosphatase superfamily. Mg(2+) serves as cofactor.

It carries out the reaction a myo-inositol phosphate + H2O = myo-inositol + phosphate. The polypeptide is Inositol-1-monophosphatase (suhB) (Mycobacterium leprae (strain TN)).